The sequence spans 167 residues: uncharacterized protein (167 aa).

Helical transmembrane passes span 13 to 33 (LIYL…TWLI), 37 to 57 (VLAV…FLPY), 61 to 81 (WFAL…KIGE), and 103 to 123 (LLLI…LVPS).

It localises to the cell membrane. This is an uncharacterized protein from Haemophilus influenzae (strain ATCC 51907 / DSM 11121 / KW20 / Rd).